Reading from the N-terminus, the 81-residue chain is Small ribosomal subunit protein bS18A (81 aa).

The protein belongs to the bacterial ribosomal protein bS18 family. Part of the 30S ribosomal subunit. Forms a tight heterodimer with protein bS6.

Its function is as follows. Binds as a heterodimer with protein bS6 to the central domain of the 16S rRNA, where it helps stabilize the platform of the 30S subunit. In Saccharopolyspora erythraea (strain ATCC 11635 / DSM 40517 / JCM 4748 / NBRC 13426 / NCIMB 8594 / NRRL 2338), this protein is Small ribosomal subunit protein bS18A.